A 347-amino-acid polypeptide reads, in one-letter code: Probable replication factor C subunit 5 (347 aa).

G64–T71 serves as a coordination point for ATP.

It belongs to the activator 1 small subunits family. As to quaternary structure, heteropentamer of various rfc subunits that forms a complex (RFC) with PCNA in the presence of ATP.

Its subcellular location is the nucleus. The elongation of primed DNA templates by DNA polymerase delta and epsilon requires the action of the accessory proteins PCNA and activator 1. The protein is Probable replication factor C subunit 5 (rfc5) of Dictyostelium discoideum (Social amoeba).